Reading from the N-terminus, the 89-residue chain is U-scoloptoxin(12)-Er1a (89 aa).

The N-terminal stretch at 1 to 22 is a signal peptide; it reads MKGLFLVVFLMWFVSQMNTEET.

The protein belongs to the scoloptoxin-12 family. Contains 3 disulfide bonds. Expressed by the venom gland.

It is found in the secreted. This chain is U-scoloptoxin(12)-Er1a, found in Ethmostigmus rubripes (Giant centipede).